Reading from the N-terminus, the 962-residue chain is Translation initiation factor IF-2 (962 aa).

The interval 99 to 366 (VKAAQTQAAP…KKGKKLKLEP (268 aa)) is disordered. Residues 117-141 (DAAKARAEAAARAEARAKAEAEAAK) show a composition bias toward basic and acidic residues. Residues 145-155 (AKAGNKAKPAA) show a composition bias toward low complexity. The segment covering 173-216 (KPAEESKAEKAQADKMPSEKPAEPKEKAAKPKHERNGKGKDAKK) has biased composition (basic and acidic residues). Residues 219–234 (KPAAPAVPQPVVSAEE) show a composition bias toward low complexity. Residues 235–269 (QAQRDEEARRAAALRAHQEALLKEKQERQARREAM) are compositionally biased toward basic and acidic residues. Over residues 270–283 (KQQAEQQAKAAQEA) the composition is skewed to low complexity. Composition is skewed to basic and acidic residues over residues 314–327 (AKKE…DEGQ) and 338–354 (GGRD…ERVR). A tr-type G domain is found at 462 to 631 (PRPPVVTVMG…LLEAEVLELT (170 aa)). Residues 471–478 (GHVDHGKT) are G1. 471 to 478 (GHVDHGKT) contacts GTP. A G2 region spans residues 496–500 (GITQH). The interval 517–520 (DTPG) is G3. Residues 517-521 (DTPGH) and 571-574 (NKID) contribute to the GTP site. The segment at 571–574 (NKID) is G4. The G5 stretch occupies residues 607 to 609 (SAK).

This sequence belongs to the TRAFAC class translation factor GTPase superfamily. Classic translation factor GTPase family. IF-2 subfamily.

The protein localises to the cytoplasm. Functionally, one of the essential components for the initiation of protein synthesis. Protects formylmethionyl-tRNA from spontaneous hydrolysis and promotes its binding to the 30S ribosomal subunits. Also involved in the hydrolysis of GTP during the formation of the 70S ribosomal complex. In Neisseria meningitidis serogroup B (strain ATCC BAA-335 / MC58), this protein is Translation initiation factor IF-2.